Reading from the N-terminus, the 182-residue chain is Large ribosomal subunit protein uL16 (182 aa).

This sequence belongs to the universal ribosomal protein uL16 family.

This chain is Large ribosomal subunit protein uL16, found in Pyrobaculum neutrophilum (strain DSM 2338 / JCM 9278 / NBRC 100436 / V24Sta) (Thermoproteus neutrophilus).